Consider the following 289-residue polypeptide: Small ribosomal subunit protein uS2C (289 aa).

The protein belongs to the universal ribosomal protein uS2 family. Component of the small ribosomal subunit. Mature ribosomes consist of a small (40S) and a large (60S) subunit. The 40S subunit contains about 33 different proteins and 1 molecule of RNA (18S). The 60S subunit contains about 49 different proteins and 3 molecules of RNA (25S, 5.8S and 5S). Interacts with rps21.

Its subcellular location is the cytoplasm. Functionally, required for the assembly and/or stability of the 40S ribosomal subunit. Required for the processing of the 20S rRNA-precursor to mature 18S rRNA in a late step of the maturation of 40S ribosomal subunits. The polypeptide is Small ribosomal subunit protein uS2C (rps0c) (Schizosaccharomyces japonicus (strain yFS275 / FY16936) (Fission yeast)).